The sequence spans 172 residues: Translation initiation factor IF-3 (172 aa).

Belongs to the IF-3 family. In terms of assembly, monomer.

Its subcellular location is the cytoplasm. In terms of biological role, IF-3 binds to the 30S ribosomal subunit and shifts the equilibrium between 70S ribosomes and their 50S and 30S subunits in favor of the free subunits, thus enhancing the availability of 30S subunits on which protein synthesis initiation begins. The chain is Translation initiation factor IF-3 from Oceanobacillus iheyensis (strain DSM 14371 / CIP 107618 / JCM 11309 / KCTC 3954 / HTE831).